Consider the following 242-residue polypeptide: Lysosomal membrane ascorbate-dependent ferrireductase CYB561A3 (242 aa).

The Cytoplasmic portion of the chain corresponds to 1–7; the sequence is MVSGRFY. The chain crosses the membrane as a helical span at residues 8 to 28; it reads LSCLLLGSLGSMCILFTIYWM. A Cytochrome b561 domain is found at 12–219; sequence LLGSLGSMCI…FGLLVLYILL (208 aa). The Lumenal portion of the chain corresponds to 29 to 45; the sequence is QYWRGGFAWNGSIYMFN. Residue asparagine 38 is glycosylated (N-linked (GlcNAc...) asparagine). Residues 46-66 traverse the membrane as a helical segment; sequence WHPVLMVAGMVVFYGGASLVY. Residues histidine 47 and arginine 67 each coordinate heme b. At 67–83 the chain is on the cytoplasmic side; sequence RLPQSWVGPKLPWKLLH. L-ascorbate contacts are provided by lysine 76 and lysine 80. Histidine 83 is a binding site for heme b. The helical transmembrane segment at 84–104 threads the bilayer; the sequence is AALHLMAFVLTVVGLVAVFTF. Over 105 to 119 the chain is Lumenal; it reads HNHGRTANLYSLHSW. Heme b is bound by residues 112–115 and histidine 117; that span reads NLYS. The helical transmembrane segment at 120 to 140 threads the bilayer; sequence LGITTVFLFACQWFLGFAVFL. At 141–154 the chain is on the cytoplasmic side; the sequence is LPWASMWLRSLLKP. Residue arginine 149 coordinates L-ascorbate. The chain crosses the membrane as a helical span at residues 155–175; sequence IHVFFGAAILSLSIASVISGI. Residues histidine 156 and glutamate 177 each coordinate heme b. Residues 176-202 are Lumenal-facing; it reads NEKLFFSLKNTTRPYHSLPSEAVFANS. A helical transmembrane segment spans residues 203–223; that stretch reads TGMLVVAFGLLVLYILLASSW. Residue lysine 224 coordinates heme b. The Cytoplasmic segment spans residues 224–242; it reads KRPEPGILTDRQPLLHDGE.

As to quaternary structure, homodimer. Requires heme b as cofactor. N-glycosylated.

It is found in the late endosome membrane. The protein resides in the lysosome membrane. It catalyses the reaction Fe(3+)(out) + L-ascorbate(in) = monodehydro-L-ascorbate radical(in) + Fe(2+)(out) + H(+). Transmembrane reductase that uses ascorbate as an electron donor in the cytoplasm and transfers electrons across membranes to reduce iron cations Fe(3+) into Fe(2+) in the lumen of the late endosome and lysosome. Reduced iron can then be extruded from the late endosome and lysosome to the cytoplasm by divalent metal-specific transporters. It is therefore most probably involved in endosomal and lysosomal cellular iron homeostasis. This Homo sapiens (Human) protein is Lysosomal membrane ascorbate-dependent ferrireductase CYB561A3.